A 411-amino-acid chain; its full sequence is uncharacterized protein (411 aa).

Disordered regions lie at residues 1-91 and 253-280; these read METP…QDEE and KGPL…AYSP. The span at 46–57 shows a compositional bias: acidic residues; sequence ETTESADSENDM. The span at 74-86 shows a compositional bias: low complexity; it reads SNESFSSNQSTES. Over residues 258-272 the composition is skewed to basic and acidic residues; the sequence is RRNEEDENKPQEKRP. Ser-279 carries the post-translational modification Phosphoserine.

Widely expressed, highest levels in cerebellum, brain cortex, hippocampus, pons, putamen and amygdala. Highly expressed in neurons, but also present in glial cells. Slightly higher expression in the dorsolateral prefrontal cortex of schizophrenic patients compared to control individuals.

Its subcellular location is the cytoplasm. This is an uncharacterized protein from Homo sapiens (Human).